A 697-amino-acid polypeptide reads, in one-letter code: Sodium-dependent phosphate transport protein 2B (697 aa).

The disordered stretch occupies residues 1–45 (MAPWPELENAQPNPGKFIEGASGPQSSIPAKDKEASKTNDNGTPV). Topologically, residues 1–91 (MAPWPELENA…WSERDTKGKT (91 aa)) are cytoplasmic. Residues 92–112 (LCIFQGVGKFILLLGFLYLFV) form a helical membrane-spanning segment. Over 113–136 (CSLDVLSSAFQLVGGKVAGQFFSN) the chain is Extracellular. The helical transmembrane segment at 137–157 (NSIMSNPVAGLVIGVLVTVMV) threads the bilayer. The Cytoplasmic portion of the chain corresponds to 158–213 (QSSSTSSSIIVSMVASSLLTVRAAIPIIMGANIGTSITNTIVALMQAGDRNEFRRA). A helical membrane pass occupies residues 214–234 (FAGATVHDFFNWLSVFVLLPL). At 235-363 (EAATHYLEIL…FVNFSLPDLA (129 aa)) the chain is on the extracellular side. N-linked (GlcNAc...) asparagine glycans are attached at residues N295, N308, N321, and N356. C303 and C350 are oxidised to a cystine. Residues 364 to 384 (VGIILLTVSLVVLCGCLIMIV) traverse the membrane as a helical segment. Topologically, residues 385–408 (KLLGSVLRGQVATVIKKTLNTDFP) are cytoplasmic. Residues 409 to 429 (FPFAWLTGYLAILVGAGMTFI) traverse the membrane as a helical segment. The Extracellular portion of the chain corresponds to 430-486 (VQSSSVFTSAMTPLIGIGVISIERAYPLTLGSNIGTTTTAILAALASPGNTLRSSLQ). Residues 487–507 (IALCHFFFNISGILLWYPIPF) traverse the membrane as a helical segment. At 508 to 526 (TRLPIRLAKGLGNISAKYR) the chain is on the cytoplasmic side. A helical membrane pass occupies residues 527–547 (WFAVFYLIFFFFVTPLTVFGL). Over 548 to 551 (SLAG) the chain is Extracellular. The helical transmembrane segment at 552–572 (WPVLVGVGVPIILLLLLVLCL) threads the bilayer. Topologically, residues 573-696 (RMLQFRCPRI…SMKALSNTTV (124 aa)) are cytoplasmic.

It belongs to the SLC34A transporter family. Highly abundant in the ileum of small intestine, whereas it is almost absent in the duodenum and in the jejunum.

The protein resides in the apical cell membrane. It catalyses the reaction 3 Na(+)(out) + phosphate(out) = 3 Na(+)(in) + phosphate(in). Its function is as follows. Involved in actively transporting phosphate into cells via Na(+) cotransport. The protein is Sodium-dependent phosphate transport protein 2B (Slc34a2) of Mus musculus (Mouse).